The sequence spans 328 residues: tRNA dimethylallyltransferase (328 aa).

10–17 (GPTASGKT) contributes to the ATP binding site. 12–17 (TASGKT) contributes to the substrate binding site.

The protein belongs to the IPP transferase family. In terms of assembly, monomer. Requires Mg(2+) as cofactor.

It carries out the reaction adenosine(37) in tRNA + dimethylallyl diphosphate = N(6)-dimethylallyladenosine(37) in tRNA + diphosphate. Its function is as follows. Catalyzes the transfer of a dimethylallyl group onto the adenine at position 37 in tRNAs that read codons beginning with uridine, leading to the formation of N6-(dimethylallyl)adenosine (i(6)A). The chain is tRNA dimethylallyltransferase from Bifidobacterium longum (strain NCC 2705).